The primary structure comprises 43 residues: Thaumatin-like protein 1 (43 aa).

It belongs to the thaumatin family.

In Glebionis coronaria (Crown daisy), this protein is Thaumatin-like protein 1.